Here is a 335-residue protein sequence, read N- to C-terminus: MPSIILYCSWNQDRGFLSIGSENGYQVYRSNPFTLCFSKKANGASICEMLYESSLLAFVNISPESTRLLKLVDIKRDIVLCRIFYPSPVLSVRFTWNRLVVLIKGSIYVYNLKNMELINTLNTSKGNVIAFAVHENYVAYNSPTNPGDIYLASLDTAIPVTLIHCHSSAVQVVDFHPRGHLIATASAKGTVIRVITTSDGELVTELRRGYIPASIVSISFHPVEPFLACASENGTIHVFKISKQPSDPNSSPTSSVTVSSSWSKYLTSNVAKVWDTRKEFATAKIPEASFYGKIIFSSSGPHIQVASYSGHYYRFAVNLKNGGNCALLERYIFDD.

2 WD repeats span residues 165–205 (CHSS…LVTE) and 210–249 (YIPA…SDPN).

Belongs to the WD repeat PROPPIN family.

The protein localises to the cytoplasm. It localises to the golgi apparatus. It is found in the golgi stack membrane. Its subcellular location is the vacuole membrane. The protein resides in the preautophagosomal structure membrane. In terms of biological role, required for cytoplasm to vacuole transport (Cvt) vesicles formation and autophagy. Has a role in sporulation. The protein is Autophagy-related protein 21 (mug179) of Schizosaccharomyces pombe (strain 972 / ATCC 24843) (Fission yeast).